The following is a 555-amino-acid chain: MTTPANPRLPIHAAHGTELTARSWQTEAPLRMLMNNLDPENAERPEDLVVYGGTGRAARSWEAYDALVRTLTTLGDDETMLVQSGKPVGVMRTHEWAPRVLIANSNLVGDWANWEEFRRLEDLGLTMYGQMTAGSWIYIGTQGILQGTFETFAAVADKRFGGTLAGTITVTAGLGGMGGAQPLAVTMNDGVVICVECDPERIRRRIDHRYLDVEAPSLEAAVALAVEARDERRPLSIGLLGNAAEVLPRILETEVPVDIVTDQTSAHDPLYYLPVGVPFEEWAARREADPEGFTKEARASMAAHVRAMVELQDRGAEVFDYGNSIRDEARKGGYDRAFEFPGFVPAYIRPLFCEGKGPFRWAALSGDPADIAATDRAILELFPANERLRKWITMAGERVHFQGLPARICWLGYGERHLAGLRFNEMVASGELKAPIVIGRDHLDCGSVASPYRETEGMLDGSDAIADWAVLNALVNTASGASWVSFHHGGGVGIGRSLHAGQVCVADGTDLAAQKIERVLTNDPGMGVIRHVDAGYDRAAEVARERGVRIPMSEG.

Residues 52 to 53 (GG), Q130, 176 to 178 (GMG), E196, R201, 242 to 243 (NA), 263 to 267 (QTSAH), 272 to 273 (YL), and Y321 each bind NAD(+). C409 is an active-site residue. G491 serves as a coordination point for NAD(+).

This sequence belongs to the urocanase family. It depends on NAD(+) as a cofactor.

It localises to the cytoplasm. It catalyses the reaction 4-imidazolone-5-propanoate = trans-urocanate + H2O. The protein operates within amino-acid degradation; L-histidine degradation into L-glutamate; N-formimidoyl-L-glutamate from L-histidine: step 2/3. Its function is as follows. Catalyzes the conversion of urocanate to 4-imidazolone-5-propionate. The polypeptide is Urocanate hydratase (Nocardioides sp. (strain ATCC BAA-499 / JS614)).